The chain runs to 443 residues: UDP-N-acetylmuramoylalanine--D-glutamate ligase (443 aa).

An ATP-binding site is contributed by 116-122 (GTNGKST).

Belongs to the MurCDEF family.

The protein resides in the cytoplasm. It carries out the reaction UDP-N-acetyl-alpha-D-muramoyl-L-alanine + D-glutamate + ATP = UDP-N-acetyl-alpha-D-muramoyl-L-alanyl-D-glutamate + ADP + phosphate + H(+). It functions in the pathway cell wall biogenesis; peptidoglycan biosynthesis. In terms of biological role, cell wall formation. Catalyzes the addition of glutamate to the nucleotide precursor UDP-N-acetylmuramoyl-L-alanine (UMA). The protein is UDP-N-acetylmuramoylalanine--D-glutamate ligase of Novosphingobium aromaticivorans (strain ATCC 700278 / DSM 12444 / CCUG 56034 / CIP 105152 / NBRC 16084 / F199).